The following is a 363-amino-acid chain: Chorismate synthase (363 aa).

Arginine 48 and arginine 54 together coordinate NADP(+). FMN contacts are provided by residues 125–127, 238–239, glycine 278, 293–297, and arginine 319; these read RSS, NA, and KPTSS.

Belongs to the chorismate synthase family. In terms of assembly, homotetramer. FMNH2 serves as cofactor.

It carries out the reaction 5-O-(1-carboxyvinyl)-3-phosphoshikimate = chorismate + phosphate. It functions in the pathway metabolic intermediate biosynthesis; chorismate biosynthesis; chorismate from D-erythrose 4-phosphate and phosphoenolpyruvate: step 7/7. Catalyzes the anti-1,4-elimination of the C-3 phosphate and the C-6 proR hydrogen from 5-enolpyruvylshikimate-3-phosphate (EPSP) to yield chorismate, which is the branch point compound that serves as the starting substrate for the three terminal pathways of aromatic amino acid biosynthesis. This reaction introduces a second double bond into the aromatic ring system. This chain is Chorismate synthase, found in Acidithiobacillus ferrooxidans (strain ATCC 23270 / DSM 14882 / CIP 104768 / NCIMB 8455) (Ferrobacillus ferrooxidans (strain ATCC 23270)).